Here is a 121-residue protein sequence, read N- to C-terminus: Small ribosomal subunit protein bS6 (121 aa).

The protein belongs to the bacterial ribosomal protein bS6 family.

Functionally, binds together with bS18 to 16S ribosomal RNA. The protein is Small ribosomal subunit protein bS6 of Rickettsia conorii (strain ATCC VR-613 / Malish 7).